Reading from the N-terminus, the 80-residue chain is RNA-binding protein Hfq (80 aa).

One can recognise a Sm domain in the interval 10 to 70 (DAFLNQVRKE…ISTISPLRPV (61 aa)).

It belongs to the Hfq family. In terms of assembly, homohexamer.

RNA chaperone that binds small regulatory RNA (sRNAs) and mRNAs to facilitate mRNA translational regulation in response to envelope stress, environmental stress and changes in metabolite concentrations. Also binds with high specificity to tRNAs. This is RNA-binding protein Hfq from Desulforamulus reducens (strain ATCC BAA-1160 / DSM 100696 / MI-1) (Desulfotomaculum reducens).